A 349-amino-acid polypeptide reads, in one-letter code: N-acetyltaurine hydrolase (349 aa).

Residues histidine 26, histidine 28, glutamate 169, histidine 201, histidine 230, and aspartate 298 each coordinate a divalent metal cation.

Belongs to the metallo-dependent hydrolases superfamily. Phosphotriesterase family. It depends on a divalent metal cation as a cofactor.

It is found in the cytoplasm. Its subcellular location is the cytosol. It catalyses the reaction N-acetyltaurine + H2O = taurine + acetate. It carries out the reaction N-propanoyltaurine + H2O = propanoate + taurine. The catalysed reaction is N-acetyl-L-methionine + H2O = L-methionine + acetate. The enzyme catalyses N-acetyl-L-isoleucine + H2O = L-isoleucine + acetate. It catalyses the reaction N-acetyl-L-leucine + H2O = L-leucine + acetate. It carries out the reaction N-acetyl-L-valine + H2O = L-valine + acetate. Its function is as follows. N-acetyltaurine hydrolase that regulates feeding by catalyzing the hydrolysis of N-acetyltaurine into taurine and acetate. N-acetyltaurine has anorexigenic and anti-obesity effects that are dependent on GFRAL receptor and GDF15. PTER also acts on other N-acetyl amino acids (Met, Ile, Leu, Val) and N-propionyltaurine, but at lower rates. The sequence is that of N-acetyltaurine hydrolase (PTER) from Bos taurus (Bovine).